Here is a 202-residue protein sequence, read N- to C-terminus: Glycerol-3-phosphate acyltransferase (202 aa).

6 consecutive transmembrane segments (helical) span residues 2–22 (MIVV…GYVI), 54–74 (FIVT…PIWF), 85–105 (FFTH…YPIY), 120–140 (VVLG…FGVL), 141–161 (YIFK…VIGS), and 162–182 (LIIQ…ILIV).

The protein belongs to the PlsY family. Probably interacts with PlsX.

The protein resides in the cell membrane. It catalyses the reaction an acyl phosphate + sn-glycerol 3-phosphate = a 1-acyl-sn-glycero-3-phosphate + phosphate. The protein operates within lipid metabolism; phospholipid metabolism. Functionally, catalyzes the transfer of an acyl group from acyl-phosphate (acyl-PO(4)) to glycerol-3-phosphate (G3P) to form lysophosphatidic acid (LPA). This enzyme utilizes acyl-phosphate as fatty acyl donor, but not acyl-CoA or acyl-ACP. This Staphylococcus haemolyticus (strain JCSC1435) protein is Glycerol-3-phosphate acyltransferase.